The sequence spans 509 residues: Bifunctional purine biosynthesis protein PurH (509 aa).

In terms of domain architecture, MGS-like spans 1–146 (MTIQKINRVL…KNWYRVGVCV (146 aa)).

It belongs to the PurH family.

It carries out the reaction (6R)-10-formyltetrahydrofolate + 5-amino-1-(5-phospho-beta-D-ribosyl)imidazole-4-carboxamide = 5-formamido-1-(5-phospho-D-ribosyl)imidazole-4-carboxamide + (6S)-5,6,7,8-tetrahydrofolate. It catalyses the reaction IMP + H2O = 5-formamido-1-(5-phospho-D-ribosyl)imidazole-4-carboxamide. The protein operates within purine metabolism; IMP biosynthesis via de novo pathway; 5-formamido-1-(5-phospho-D-ribosyl)imidazole-4-carboxamide from 5-amino-1-(5-phospho-D-ribosyl)imidazole-4-carboxamide (10-formyl THF route): step 1/1. It functions in the pathway purine metabolism; IMP biosynthesis via de novo pathway; IMP from 5-formamido-1-(5-phospho-D-ribosyl)imidazole-4-carboxamide: step 1/1. This is Bifunctional purine biosynthesis protein PurH from Natranaerobius thermophilus (strain ATCC BAA-1301 / DSM 18059 / JW/NM-WN-LF).